The primary structure comprises 37 residues: Large ribosomal subunit protein bL36 (37 aa).

The protein belongs to the bacterial ribosomal protein bL36 family.

The chain is Large ribosomal subunit protein bL36 from Prochlorococcus marinus (strain MIT 9313).